The primary structure comprises 88 residues: Small ribosomal subunit protein uS15c (88 aa).

It belongs to the universal ribosomal protein uS15 family. As to quaternary structure, part of the 30S ribosomal subunit.

It is found in the plastid. The protein resides in the chloroplast. This chain is Small ribosomal subunit protein uS15c (rps15), found in Barbarea verna (Land cress).